The sequence spans 300 residues: MNKIWKLKNVKVGVAPILWTNDDMPELGGDISFDRAISEMAQAGYQGTEIGNKFPKDAKILLRELKKYNLEIASAWFSGYIISDFEKNFQDFQKHCLFLKALGAKVVVFSEQTYSIQGQNKPLFKDKPYFTNQEFENLAQGLNKFGKWSKQHGIELVYHHHMGTGIQSLKETEKILELTDPEFVSLIFDTGHFAHAGEDIVFCLKRLISRIRHIHLKDIRKEKINELKAKNLSFLEGVKQGIFTVPGDGDIQNYPLFFELLAKNNYQGWLIVEAEQDPRKANPLEYAKKAMDYLRSLISW.

The protein belongs to the IolE/MocC family. Requires glutathione as cofactor. Co(2+) is required as a cofactor. The cofactor is Mn(2+).

It catalyses the reaction scyllo-inosose = 3D-3,5/4-trihydroxycyclohexane-1,2-dione + H2O. In terms of biological role, catalyzes the dehydration of inosose (2-keto-myo-inositol, 2KMI or 2,4,6/3,5-pentahydroxycyclohexanone) to 3D-(3,5/4)-trihydroxycyclohexane-1,2-dione (D-2,3-diketo-4-deoxy-epi-inositol). This Mesomycoplasma hyopneumoniae (strain 232) (Mycoplasma hyopneumoniae) protein is Inosose dehydratase.